The sequence spans 37 residues: MKIRASIRKICEKCRLIRRRRRIMVICCNSKHKQKQG.

Belongs to the bacterial ribosomal protein bL36 family.

It localises to the plastid. The protein localises to the chloroplast. This is Large ribosomal subunit protein bL36c from Adiantum capillus-veneris (Maidenhair fern).